The following is a 217-amino-acid chain: Somatotropin (217 aa).

Residues 1 to 26 (MMAAGPRTSLLLAFALLCLPWTQVVG) form the signal peptide. H46 serves as a coordination point for Zn(2+). C79 and C190 are oxidised to a cystine. S132 carries the phosphoserine modification. E199 lines the Zn(2+) pocket. An intrachain disulfide couples C207 to C215.

This sequence belongs to the somatotropin/prolactin family.

Its subcellular location is the secreted. Plays an important role in growth control. Its major role in stimulating body growth is to stimulate the liver and other tissues to secrete IGF1. It stimulates both the differentiation and proliferation of myoblasts. It also stimulates amino acid uptake and protein synthesis in muscle and other tissues. This chain is Somatotropin (GH1), found in Bos taurus (Bovine).